The chain runs to 297 residues: 4-hydroxy-tetrahydrodipicolinate synthase (297 aa).

A pyruvate-binding site is contributed by T46. The active-site Proton donor/acceptor is the Y134. Residue K162 is the Schiff-base intermediate with substrate of the active site. I209 contributes to the pyruvate binding site.

It belongs to the DapA family. In terms of assembly, homotetramer; dimer of dimers.

It is found in the cytoplasm. The catalysed reaction is L-aspartate 4-semialdehyde + pyruvate = (2S,4S)-4-hydroxy-2,3,4,5-tetrahydrodipicolinate + H2O + H(+). It participates in amino-acid biosynthesis; L-lysine biosynthesis via DAP pathway; (S)-tetrahydrodipicolinate from L-aspartate: step 3/4. Functionally, catalyzes the condensation of (S)-aspartate-beta-semialdehyde [(S)-ASA] and pyruvate to 4-hydroxy-tetrahydrodipicolinate (HTPA). The sequence is that of 4-hydroxy-tetrahydrodipicolinate synthase from Methanosphaera stadtmanae (strain ATCC 43021 / DSM 3091 / JCM 11832 / MCB-3).